The following is a 286-amino-acid chain: Protein N-terminal amidase (286 aa).

In terms of domain architecture, CN hydrolase spans 1–286; it reads MKFGCVQFFP…NGIVVGELEK (286 aa). The active-site Proton acceptor is Glu43. The active-site Proton donor is Lys121. Cys155 functions as the Nucleophile in the catalytic mechanism.

It belongs to the carbon-nitrogen hydrolase superfamily.

It localises to the cytoplasm. The protein resides in the nucleus. Deamidates N-terminal Asn and Gln. Component of a targeting complex in the N-end rule pathway. The polypeptide is Protein N-terminal amidase (nta1) (Schizosaccharomyces pombe (strain 972 / ATCC 24843) (Fission yeast)).